A 446-amino-acid chain; its full sequence is Chromosomal replication initiator protein DnaA (446 aa).

The domain I, interacts with DnaA modulators stretch occupies residues 1–72 (MENILDLWNK…ADTIYELTGE (72 aa)). Residues 72 to 109 (EELSIKFIIPQNQDEVEAMPKSPIKKMSKEDPVDIPQN) form a domain II region. The segment at 110 to 326 (MLNPKYTFDT…GALIRVVAYS (217 aa)) is domain III, AAA+ region. G154, G156, K157, and T158 together coordinate ATP. The segment at 327–446 (SLINKDINAD…HVKEIKEQLK (120 aa)) is domain IV, binds dsDNA.

The protein belongs to the DnaA family. In terms of assembly, oligomerizes as a right-handed, spiral filament on DNA at oriC.

It is found in the cytoplasm. Its function is as follows. Plays an essential role in the initiation and regulation of chromosomal replication. ATP-DnaA binds to the origin of replication (oriC) to initiate formation of the DNA replication initiation complex once per cell cycle. Binds the DnaA box (a 9 base pair repeat at the origin) and separates the double-stranded (ds)DNA. Forms a right-handed helical filament on oriC DNA; dsDNA binds to the exterior of the filament while single-stranded (ss)DNA is stabiized in the filament's interior. The ATP-DnaA-oriC complex binds and stabilizes one strand of the AT-rich DNA unwinding element (DUE), permitting loading of DNA polymerase. After initiation quickly degrades to an ADP-DnaA complex that is not apt for DNA replication. Binds acidic phospholipids. In Bacillus pumilus (strain SAFR-032), this protein is Chromosomal replication initiator protein DnaA.